The following is a 510-amino-acid chain: NAD(P)H-quinone oxidoreductase subunit 2 B, chloroplastic (510 aa).

13 helical membrane-spanning segments follow: residues 24–44 (LLLFDGSFIFPECILIFGLIL), 57–77 (IPWLYFISSTSLVMSITALLF), 99–119 (IFQFLILLCSTLCIPLSVEYI), 124–144 (MAIAEFLLFVLTATLGGMFLC), 149–169 (LITIFVAPECFSLCSYLLSGY), 183–203 (YLLMGGASSSILVHGFSWLYG), 227–247 (PGISIALIFITVGIGFKLSPA), 295–315 (WHLLLEILAILSMILGNLIAI), 323–343 (MLAYSSIGQIGYVIIGIIVGN), 354–374 (YMLFYISMNLGTFACIVLFGL), 395–415 (ALSLAPCLLSLGGLPPLAGFF), 418–438 (LHLFWCGWQAGLYFLVSIGLL), and 484–504 (MIVCVIASTIPGISMNPIIAI).

The protein belongs to the complex I subunit 2 family. NDH is composed of at least 16 different subunits, 5 of which are encoded in the nucleus.

It is found in the plastid. The protein localises to the chloroplast thylakoid membrane. It catalyses the reaction a plastoquinone + NADH + (n+1) H(+)(in) = a plastoquinol + NAD(+) + n H(+)(out). The enzyme catalyses a plastoquinone + NADPH + (n+1) H(+)(in) = a plastoquinol + NADP(+) + n H(+)(out). In terms of biological role, NDH shuttles electrons from NAD(P)H:plastoquinone, via FMN and iron-sulfur (Fe-S) centers, to quinones in the photosynthetic chain and possibly in a chloroplast respiratory chain. The immediate electron acceptor for the enzyme in this species is believed to be plastoquinone. Couples the redox reaction to proton translocation, and thus conserves the redox energy in a proton gradient. The sequence is that of NAD(P)H-quinone oxidoreductase subunit 2 B, chloroplastic from Gossypium barbadense (Sea Island cotton).